Consider the following 417-residue polypeptide: Serine hydroxymethyltransferase (417 aa).

Residues Leu120 and 124–126 contribute to the (6S)-5,6,7,8-tetrahydrofolate site; that span reads GHL. Lys229 bears the N6-(pyridoxal phosphate)lysine mark. Position 354–356 (354–356) interacts with (6S)-5,6,7,8-tetrahydrofolate; it reads SPF.

It belongs to the SHMT family. As to quaternary structure, homodimer. It depends on pyridoxal 5'-phosphate as a cofactor.

It localises to the cytoplasm. The catalysed reaction is (6R)-5,10-methylene-5,6,7,8-tetrahydrofolate + glycine + H2O = (6S)-5,6,7,8-tetrahydrofolate + L-serine. The protein operates within one-carbon metabolism; tetrahydrofolate interconversion. It participates in amino-acid biosynthesis; glycine biosynthesis; glycine from L-serine: step 1/1. Its function is as follows. Catalyzes the reversible interconversion of serine and glycine with tetrahydrofolate (THF) serving as the one-carbon carrier. This reaction serves as the major source of one-carbon groups required for the biosynthesis of purines, thymidylate, methionine, and other important biomolecules. Also exhibits THF-independent aldolase activity toward beta-hydroxyamino acids, producing glycine and aldehydes, via a retro-aldol mechanism. This chain is Serine hydroxymethyltransferase, found in Acinetobacter radioresistens.